The sequence spans 464 residues: A-type ATP synthase subunit B (464 aa).

This sequence belongs to the ATPase alpha/beta chains family. Has multiple subunits with at least A(3), B(3), C, D, E, F, H, I and proteolipid K(x).

The protein resides in the cell membrane. Functionally, component of the A-type ATP synthase that produces ATP from ADP in the presence of a proton gradient across the membrane. The B chain is a regulatory subunit. This chain is A-type ATP synthase subunit B, found in Methanococcus aeolicus (strain ATCC BAA-1280 / DSM 17508 / OCM 812 / Nankai-3).